We begin with the raw amino-acid sequence, 115 residues long: MAEICCVKEIQEEDVEKIRLPTRPELDIPDSDHEDPTVNEEEGCKTPTSSDHKIPEVKYTLCPPAPRKPKPNRSSGTKRKLTPVNVVNRIPIDLSREIEMFFEDLDRRIKKSRKQ.

The span at 17 to 36 shows a compositional bias: basic and acidic residues; it reads KIRLPTRPELDIPDSDHEDP. Residues 17 to 82 are disordered; sequence KIRLPTRPEL…RSSGTKRKLT (66 aa). Residues 67 to 81 show a composition bias toward basic residues; that stretch reads RKPKPNRSSGTKRKL.

In terms of assembly, interacts with CDKA-1 and D-type cyclins. As to expression, expressed at low levels in roots and stems.

It is found in the nucleus. In terms of biological role, probable cyclin-dependent protein kinase (CDK) inhibitor that functions as a repressor of mitosis in the endoreduplication cell cycle. In Arabidopsis thaliana (Mouse-ear cress), this protein is Cyclin-dependent protein kinase inhibitor SMR3.